A 730-amino-acid chain; its full sequence is Actin filament-associated protein 1 (730 aa).

At Met-1 the chain carries N-acetylmethionine. A disordered region spans residues Lys-47–Glu-91. A compositionally biased stretch (pro residues) spans Pro-60 to Pro-85. Residues Pro-71 to Trp-74 carry the SH3-binding motif. Residues Tyr-94–Ala-97 carry the SH2-binding 1 motif. A disordered region spans residues Ser-119–Gln-140. In terms of domain architecture, PH 1 spans Asp-153 to Ser-249. The disordered stretch occupies residues Ser-252–Gly-292. The segment covering His-268 to Ser-283 has biased composition (basic and acidic residues). Phosphoserine occurs at positions 282 and 283. The PH 2 domain maps to Asp-347–Gly-441. Residues Tyr-451–Val-456 carry the SH2-binding 2 motif. The tract at residues Lys-512 to Ala-537 is disordered. Ser-548 carries the post-translational modification Phosphoserine. The stretch at Lys-557 to Ala-648 forms a coiled coil. Residues Asp-594–Thr-637 form an interaction with F-actin region. Phosphoserine occurs at positions 664, 665, and 668. Position 675 is a phosphothreonine (Thr-675). A phosphoserine mark is found at Ser-679 and Ser-687.

As to quaternary structure, monomer and homomultimer. Interacts via its C-terminus with F-actin; probably involving AFAP1 multimers. Interacts with activated SRC SH3-SH2 domains. Interacts via its PH 1 domain with PRKCA, PRKCB and PRKCI. In terms of processing, phosphorylated on tyrosine residues by SRC. Low expression in normal breast epithelial cell line MCF-10A and in tumorigenic breast cancer cell lines MCF-7, T-47D and ZR-75-1. Highly expressed in the invasive breast cancer cell lines MDA-MB-231 and MDA-MB-435. Overexpressed in prostate carcinoma.

It is found in the cytoplasm. The protein localises to the cytoskeleton. The protein resides in the stress fiber. Functionally, can cross-link actin filaments into both network and bundle structures. May modulate changes in actin filament integrity and induce lamellipodia formation. May function as an adapter molecule that links other proteins, such as SRC and PKC to the actin cytoskeleton. Seems to play a role in the development and progression of prostate adenocarcinoma by regulating cell-matrix adhesions and migration in the cancer cells. The sequence is that of Actin filament-associated protein 1 (AFAP1) from Homo sapiens (Human).